Here is a 702-residue protein sequence, read N- to C-terminus: uncharacterized protein (702 aa).

Composition is skewed to low complexity over residues 306 to 384 (NNNN…NNNN), 488 to 511 (PTKT…TNIT), 559 to 590 (QQSQ…NNNN), 603 to 612 (SNQNSNNNNQ), and 621 to 639 (NNNN…NNNN). Disordered regions lie at residues 306–385 (NNNN…NNNE), 488–513 (PTKT…ITYG), and 551–645 (STMN…NSRY). A VPS9 domain is found at 337–489 (NNINNNINNN…IKSLDILSPT (153 aa)).

This is an uncharacterized protein from Dictyostelium discoideum (Social amoeba).